The following is a 192-amino-acid chain: Adenylate kinase (192 aa).

10-18 (GVPGVGGTT) contributes to the ATP binding site.

This sequence belongs to the archaeal adenylate kinase family. Monomer.

It localises to the cytoplasm. It carries out the reaction AMP + ATP = 2 ADP. This is Adenylate kinase from Methanococcus maripaludis (strain DSM 14266 / JCM 13030 / NBRC 101832 / S2 / LL).